The primary structure comprises 372 residues: F-box/kelch-repeat protein At4g14905 (372 aa).

One can recognise an F-box domain in the interval 34–74; it reads LHDEIAVSCFARVPRCYYPAISLVCRNFRRLMASPEIYIER. 3 Kelch repeats span residues 137 to 183, 184 to 229, and 232 to 280; these read ETYV…LIDG, KLYV…FFVM, and KIYR…CMNQ.

The chain is F-box/kelch-repeat protein At4g14905 from Arabidopsis thaliana (Mouse-ear cress).